The sequence spans 268 residues: AN1-type zinc finger protein 1 (268 aa).

Ala2 carries the N-acetylalanine modification. AN1-type zinc fingers lie at residues 4-52 and 58-106; these read LDIG…VINE and QHTS…IPKP. 16 residues coordinate Zn(2+): Cys10, Cys15, Cys25, Cys28, Cys33, His36, His42, Cys44, Cys64, Cys69, Cys79, Cys82, Cys87, His90, His96, and Cys98. A ubiquitin-like region spans residues 160–260; the sequence is QTERIYFQVF…EYLNDEEQFC (101 aa).

In terms of assembly, associates with the 26S proteasome; this association occurs upon exposure to arsenite and is reduced in the presence of ATP. Interacts (via AN1-type 1 and 2 zinc fingers) with PSMD1; this interaction is increased upon arsenite treatment and occurs in an ATP-independent manner. Interacts with PSMC4. Interacts with PSMA1. Interacts (via its ubiquitin-like region) with VCP; this interaction occurs in an arsenite-dependent manner and is necessary for the recruitment of the ubiquitin-selective ATPase VCP to stress granules (SGs).

The protein resides in the cytoplasm. It is found in the stress granule. Plays a role in the regulation of cytoplasmic stress granules (SGs) turnover. SGs are dynamic and transient cytoplasmic ribonucleoprotein assemblies important for cellular protein homeostasis when protein production is suspended after acute exogenous stress. Associates with SGs and is involved in the efficient and specific arsenite-induced clearance process of SGs through the recruitment of the ubiquitin-selective ATPase VCP and the 26S proteasome. This process requires both complexes for efficient degradation of damaged ubiquitinated SG proteins during recovery from arsenite stress, and hence avoiding aberrant cytoplasmic SGs degradation via autophagy. In Homo sapiens (Human), this protein is AN1-type zinc finger protein 1.